Reading from the N-terminus, the 374-residue chain is MQNTSFDNESDYSDDSDFASASETENRIGLTVPLELAGGRLDAVLAKLLPDYSRSRLTSWIKEGAVIVNDKPSQPKDKMIGGEQICVTVRPSEENLAFVPEPMALDIVYEDDTVIVVNKPAGLVVHPAAGNWTGTLLNGLLAHCPELSQVPRAGIVHRLDKETSGLMVVAKTLPAQNSLVRQLQERTVKRIYRAVANGIVPFDGKIETQIGRDPHNRLKMAVVKFGGKPAVTHVKVLERYLTHSYIECSLETGRTHQIRVHMREANHPLAADPVYGNPRHPCGDTVKEAVKSLGARQALHAYRLSFTHPESGETVSFEAPIPNDIYHLLSVLRLEAGLDSSLSNEEEWQDKFGADDDDDWNEDDYDVEVVYVRE.

The interval 1–20 (MQNTSFDNESDYSDDSDFAS) is disordered. Positions 8 to 17 (NESDYSDDSD) are enriched in acidic residues. An S4 RNA-binding domain is found at 39-112 (GRLDAVLAKL…MALDIVYEDD (74 aa)). Asp160 is an active-site residue.

This sequence belongs to the pseudouridine synthase RluA family.

The protein localises to the cytoplasm. It carries out the reaction uridine(1911/1915/1917) in 23S rRNA = pseudouridine(1911/1915/1917) in 23S rRNA. Its function is as follows. Responsible for synthesis of pseudouridine from uracil at positions 1911, 1915 and 1917 in 23S ribosomal RNA. The sequence is that of Ribosomal large subunit pseudouridine synthase D (rluD) from Neisseria meningitidis serogroup B (strain ATCC BAA-335 / MC58).